The primary structure comprises 335 residues: Ankyrin repeat and SOCS box protein 1 (335 aa).

ANK repeat units follow at residues Cys36–Glu68, Leu77–Leu106, Lys110–Gly139, His143–Val172, Leu191–Phe220, and Ser235–Leu265. Residues Leu286–Glu335 enclose the SOCS box domain.

It belongs to the ankyrin SOCS box (ASB) family. As to quaternary structure, interacts with CUL5 and RNF7. Interacts with TAB2 and TAB3.

It is found in the cytoplasm. The protein operates within protein modification; protein ubiquitination. Its function is as follows. Probable substrate-recognition component of a SCF-like ECS (Elongin-Cullin-SOCS-box protein) E3 ligase complex which mediates the ubiquitination and subsequent proteasomal degradation of target proteins. Mediates Notch-induced ubiquitination and degradation of TCF3/E2A and JAK2. Functions as a tumor suppressor by enhancing CHCHD3 'Lys-48'-linked ubiquitination, leading to inhibition of the CHCHD3/ROS signaling pathway. Suppresses TAB2-linked 'Lys-48' polyubiquitination and consequently facilitates the initiation of NF-kappa-B and MAPK signaling cascades. May play a role in testis development. In Homo sapiens (Human), this protein is Ankyrin repeat and SOCS box protein 1 (ASB1).